Consider the following 74-residue polypeptide: Exodeoxyribonuclease 7 small subunit (74 aa).

Belongs to the XseB family. As to quaternary structure, heterooligomer composed of large and small subunits.

The protein localises to the cytoplasm. It catalyses the reaction Exonucleolytic cleavage in either 5'- to 3'- or 3'- to 5'-direction to yield nucleoside 5'-phosphates.. In terms of biological role, bidirectionally degrades single-stranded DNA into large acid-insoluble oligonucleotides, which are then degraded further into small acid-soluble oligonucleotides. This is Exodeoxyribonuclease 7 small subunit from Synechococcus elongatus (strain ATCC 33912 / PCC 7942 / FACHB-805) (Anacystis nidulans R2).